The following is a 102-amino-acid chain: Small ribosomal subunit protein uS10 (102 aa).

The protein belongs to the universal ribosomal protein uS10 family. As to quaternary structure, part of the 30S ribosomal subunit.

Involved in the binding of tRNA to the ribosomes. This is Small ribosomal subunit protein uS10 from Brucella abortus (strain S19).